A 332-amino-acid chain; its full sequence is MKVSYEALKQEFKRVLLARNVREDIAEECATMFADTTESGVYSHGVNRFPRFISQLEKGDIVPDAEPTKVLSLGAIEQWDAHQAIGNLTAKKMMDRAMEIADQFGIGVVALKNANHWMRGGGYGWQAAEKGYIGICWTNSIAVMPPWGAKECRIGTNPLIIAVPTTPITMVDMSCSMYSYGMLEVHRLAGRQTFVDAGFDDEGNLTRDPGTVEKNRRLLPMGFWKGSGLSIVLDMIATLLSNGLSVAEVTEEKDDEYCVSQIFIAIEVDRLIDGNTKDEKLNKIMDYVRTAERADPDVAIRLPGHEFTAIRAENKANGIPVDETVWEKIKSL.

Catalysis depends on histidine 44, which acts as the Proton donor. Residues isoleucine 168–serine 174, tryptophan 224–lysine 225, and glycine 304–glutamate 306 each bind NAD(+).

This sequence belongs to the LDH2/MDH2 oxidoreductase family. DlgD subfamily. In terms of assembly, homodimer.

It localises to the cytoplasm. The catalysed reaction is 3-dehydro-L-gulonate + NAD(+) = 2,3-dioxo-L-gulonate + NADH + H(+). The enzyme catalyses 3-dehydro-L-gulonate + NADP(+) = 2,3-dioxo-L-gulonate + NADPH + H(+). Catalyzes the reduction of 2,3-diketo-L-gulonate in the presence of NADH, to form 3-keto-L-gulonate. In Pasteurella multocida (strain Pm70), this protein is 2,3-diketo-L-gulonate reductase.